A 734-amino-acid polypeptide reads, in one-letter code: Photosystem I P700 chlorophyll a apoprotein A2 (734 aa).

Helical transmembrane passes span 46–69 (IFASHFGHLAIIFLWTSGNLFHVA), 135–158 (LYSGSIFLLILASVMLFAGWLHLQ), 175–199 (LNHHLSGLFGFSSVAWSGHLIHVAI), 273–291 (IAHHHLAIGVIFIFAGHMY), 330–353 (LHFQLGLALASLGVITSLVAQHMY), 369–395 (AALYTHHQYIAGFLMVGAFAHGAIFFV), 417–439 (AIISHLSWVSLFLGFHTLGLYVH), and 517–535 (FLVHHAIALALHTTTLILV). Positions 559 and 568 each coordinate [4Fe-4S] cluster. Helical transmembrane passes span 575–596 (AFYLSMFWMLNTIGWVTFYWHW) and 643–665 (LSVWAWMFLFGHLIWATGFMFLI). Chlorophyll a contacts are provided by H654, M662, and Y670. W671 provides a ligand contact to phylloquinone. Residues 707-727 (LVGLVHFTVGYIFTYAAFVIA) form a helical membrane-spanning segment.

It belongs to the PsaA/PsaB family. The PsaA/B heterodimer binds the P700 chlorophyll special pair and subsequent electron acceptors. PSI consists of a core antenna complex that captures photons, and an electron transfer chain that converts photonic excitation into a charge separation. The eukaryotic PSI reaction center is composed of at least 11 subunits. The cofactor is P700 is a chlorophyll a/chlorophyll a' dimer, A0 is one or more chlorophyll a, A1 is one or both phylloquinones and FX is a shared 4Fe-4S iron-sulfur center..

The protein localises to the plastid. The protein resides in the chloroplast thylakoid membrane. It carries out the reaction reduced [plastocyanin] + hnu + oxidized [2Fe-2S]-[ferredoxin] = oxidized [plastocyanin] + reduced [2Fe-2S]-[ferredoxin]. Its function is as follows. PsaA and PsaB bind P700, the primary electron donor of photosystem I (PSI), as well as the electron acceptors A0, A1 and FX. PSI is a plastocyanin/cytochrome c6-ferredoxin oxidoreductase, converting photonic excitation into a charge separation, which transfers an electron from the donor P700 chlorophyll pair to the spectroscopically characterized acceptors A0, A1, FX, FA and FB in turn. Oxidized P700 is reduced on the lumenal side of the thylakoid membrane by plastocyanin or cytochrome c6. This chain is Photosystem I P700 chlorophyll a apoprotein A2, found in Guillardia theta (Cryptophyte).